A 199-amino-acid chain; its full sequence is Recombination protein RecR (199 aa).

Residues cysteine 57 to cysteine 72 form a C4-type zinc finger. A Toprim domain is found at serine 80–proline 175.

Belongs to the RecR family.

In terms of biological role, may play a role in DNA repair. It seems to be involved in an RecBC-independent recombinational process of DNA repair. It may act with RecF and RecO. The protein is Recombination protein RecR of Alkalilimnicola ehrlichii (strain ATCC BAA-1101 / DSM 17681 / MLHE-1).